The chain runs to 172 residues: MPTISTAECFTHGKVANELHAFARGYPHEYLFSIDRKKVDISVVAGMFIPTLTGVRTLLHFEPLEPRLVIDTVKVYEQDQDCIMACRMAEAVMRVTGADIGIGTTAGIGKGAVAIASQDKIYSKVTRIDADFRTSDAKKLMQREKSGVFTALRLFEEFLLEGEFPDSYNKYI.

It belongs to the UPF0254 family.

This is UPF0254 protein Mlab_1743 from Methanocorpusculum labreanum (strain ATCC 43576 / DSM 4855 / Z).